A 291-amino-acid polypeptide reads, in one-letter code: Putative transport permease ycf38 (291 aa).

The next 6 helical transmembrane spans lie at 47 to 67 (ATLM…GGLF), 87 to 107 (SGII…PLMF), 135 to 155 (FMTC…LFMG), 165 to 185 (MIFG…SLAL), 195 to 215 (LLAF…ALAP), and 262 to 282 (ICLG…AYLV). In terms of domain architecture, ABC transmembrane type-2 spans 47–289 (ATLMAGIIQP…YLVSNILKAK (243 aa)).

It belongs to the ABC-2 integral membrane protein family.

The protein resides in the plastid. Its subcellular location is the chloroplast membrane. This chain is Putative transport permease ycf38 (ycf38), found in Pyropia yezoensis (Susabi-nori).